Consider the following 199-residue polypeptide: Glycerol-3-phosphate acyltransferase (199 aa).

5 helical membrane-spanning segments follow: residues 5 to 25 (VLTI…SAVL), 56 to 76 (SAAL…YLAF), 83 to 103 (IALG…IFFG), 118 to 138 (APIG…LVLV), and 141 to 161 (YSSF…WWLD).

Belongs to the PlsY family. In terms of assembly, probably interacts with PlsX.

It localises to the cell inner membrane. It carries out the reaction an acyl phosphate + sn-glycerol 3-phosphate = a 1-acyl-sn-glycero-3-phosphate + phosphate. The protein operates within lipid metabolism; phospholipid metabolism. Catalyzes the transfer of an acyl group from acyl-phosphate (acyl-PO(4)) to glycerol-3-phosphate (G3P) to form lysophosphatidic acid (LPA). This enzyme utilizes acyl-phosphate as fatty acyl donor, but not acyl-CoA or acyl-ACP. This chain is Glycerol-3-phosphate acyltransferase, found in Shewanella halifaxensis (strain HAW-EB4).